The primary structure comprises 892 residues: Alanine--tRNA ligase (892 aa).

Zn(2+) contacts are provided by H596, H600, C700, and H704.

This sequence belongs to the class-II aminoacyl-tRNA synthetase family. The cofactor is Zn(2+).

It is found in the cytoplasm. It carries out the reaction tRNA(Ala) + L-alanine + ATP = L-alanyl-tRNA(Ala) + AMP + diphosphate. Its function is as follows. Catalyzes the attachment of alanine to tRNA(Ala) in a two-step reaction: alanine is first activated by ATP to form Ala-AMP and then transferred to the acceptor end of tRNA(Ala). Also edits incorrectly charged Ser-tRNA(Ala) and Gly-tRNA(Ala) via its editing domain. In Methanococcus maripaludis (strain C6 / ATCC BAA-1332), this protein is Alanine--tRNA ligase.